We begin with the raw amino-acid sequence, 120 residues long: QDGDPVKGEAVFKKCMACHRIGPDAKNLVGPVLTGVVGRQAGVAPGFSYSALNHAAGEAGLHWTAENIMAYLPDPNAFLRKFVTDAGNPEAAKGSTKMVFKLPNEQERKDVVAYLKTFSN.

Q1 carries the post-translational modification Pyrrolidone carboxylic acid. Heme c is bound by residues C15, C18, H19, and M98.

The protein belongs to the cytochrome c family. In terms of processing, binds 1 heme c group covalently per subunit.

In terms of biological role, cytochrome c2 is found mainly in purple, non-sulfur, photosynthetic bacteria where it functions as the electron donor to the oxidized bacteriochlorophyll in the photophosphorylation pathway. However, it may also have a role in the respiratory chain and is found in some non-photosynthetic bacteria. This chain is Cytochrome c2 iso-1, found in Rhodospirillum centenum (Rhodocista centenaria).